A 157-amino-acid chain; its full sequence is Protein-export protein SecB (157 aa).

It belongs to the SecB family. Homotetramer, a dimer of dimers. One homotetramer interacts with 1 SecA dimer.

Its subcellular location is the cytoplasm. Functionally, one of the proteins required for the normal export of preproteins out of the cell cytoplasm. It is a molecular chaperone that binds to a subset of precursor proteins, maintaining them in a translocation-competent state. It also specifically binds to its receptor SecA. The chain is Protein-export protein SecB from Proteus mirabilis (strain HI4320).